We begin with the raw amino-acid sequence, 396 residues long: L-lactate dehydrogenase (396 aa).

An FMN hydroxy acid dehydrogenase domain is found at 1 to 380 (MIISAASDYR…TQDSLVQGLG (380 aa)). Residue Tyr24 coordinates substrate. Residues Ser106 and Gln127 each coordinate FMN. Tyr129 is a substrate binding site. FMN is bound at residue Thr155. A substrate-binding site is contributed by Arg164. Lys251 contributes to the FMN binding site. His275 functions as the Proton acceptor in the catalytic mechanism. A substrate-binding site is contributed by Arg278. 306–330 (DSGIRNGLDVVRMIALGADTVLLGR) provides a ligand contact to FMN.

Belongs to the FMN-dependent alpha-hydroxy acid dehydrogenase family. The cofactor is FMN.

The protein localises to the cell inner membrane. It carries out the reaction (S)-lactate + A = pyruvate + AH2. Catalyzes the conversion of L-lactate to pyruvate. Is coupled to the respiratory chain. The sequence is that of L-lactate dehydrogenase from Shigella flexneri serotype 5b (strain 8401).